We begin with the raw amino-acid sequence, 118 residues long: Succinate dehydrogenase assembly factor 4, mitochondrial (118 aa).

A mitochondrion-targeting transit peptide spans 1 to 30; the sequence is MQSVTRQTARVLPQMGKQVSYLSTSGAWRA. The tract at residues 65 to 118 is disordered; that stretch reads GKLDEFSRHPYQEKEPLKPWPNQTNPYTGEIGGPAGPEPTRYGDWERKGRVSDF. Composition is skewed to basic and acidic residues over residues 66–81 and 105–118; these read KLDE…KEPL and RYGD…VSDF.

Belongs to the SDHAF4 family. In terms of assembly, interacts with SdhA in its FAD-bound form.

Its subcellular location is the mitochondrion matrix. In terms of biological role, plays an essential role in the assembly of succinate dehydrogenase (SDH), an enzyme complex (also referred to as respiratory complex II) that is a component of both the tricarboxylic acid (TCA) cycle and the mitochondrial electron transport chain, and which couples the oxidation of succinate to fumarate with the reduction of ubiquinone (coenzyme Q) to ubiquinol. Binds to the flavoprotein subunit SdhA in its FAD-bound form, blocking the generation of excess reactive oxygen species (ROS) and facilitating its assembly with the iron-sulfur protein subunit SdhB into the SDH catalytic dimer. The protein is Succinate dehydrogenase assembly factor 4, mitochondrial of Drosophila melanogaster (Fruit fly).